Reading from the N-terminus, the 479-residue chain is Aspartyl/glutamyl-tRNA(Asn/Gln) amidotransferase subunit B (479 aa).

It belongs to the GatB/GatE family. GatB subfamily. As to quaternary structure, heterotrimer of A, B and C subunits.

The enzyme catalyses L-glutamyl-tRNA(Gln) + L-glutamine + ATP + H2O = L-glutaminyl-tRNA(Gln) + L-glutamate + ADP + phosphate + H(+). It carries out the reaction L-aspartyl-tRNA(Asn) + L-glutamine + ATP + H2O = L-asparaginyl-tRNA(Asn) + L-glutamate + ADP + phosphate + 2 H(+). In terms of biological role, allows the formation of correctly charged Asn-tRNA(Asn) or Gln-tRNA(Gln) through the transamidation of misacylated Asp-tRNA(Asn) or Glu-tRNA(Gln) in organisms which lack either or both of asparaginyl-tRNA or glutaminyl-tRNA synthetases. The reaction takes place in the presence of glutamine and ATP through an activated phospho-Asp-tRNA(Asn) or phospho-Glu-tRNA(Gln). The polypeptide is Aspartyl/glutamyl-tRNA(Asn/Gln) amidotransferase subunit B (Streptococcus mutans serotype c (strain ATCC 700610 / UA159)).